A 206-amino-acid polypeptide reads, in one-letter code: Large ribosomal subunit protein uL13z (206 aa).

Belongs to the universal ribosomal protein uL13 family.

This is Large ribosomal subunit protein uL13z (RPL13AA) from Arabidopsis thaliana (Mouse-ear cress).